Consider the following 377-residue polypeptide: RING-H2 finger protein ATL22 (377 aa).

The first 23 residues, 1–23 (MTSKLLPLLLNLIFLFFFPLLNA), serve as a signal peptide directing secretion. Residues 244–264 (IMCLSLVGPLTALTFCVGLVM) traverse the membrane as a helical segment. The RING-type; atypical zinc finger occupies 327–369 (CPICLSEYATKETVRCLPECEHCFHTECIDAWLKLHSSCPVCR).

This sequence belongs to the RING-type zinc finger family. ATL subfamily.

Its subcellular location is the membrane. It catalyses the reaction S-ubiquitinyl-[E2 ubiquitin-conjugating enzyme]-L-cysteine + [acceptor protein]-L-lysine = [E2 ubiquitin-conjugating enzyme]-L-cysteine + N(6)-ubiquitinyl-[acceptor protein]-L-lysine.. It participates in protein modification; protein ubiquitination. This Arabidopsis thaliana (Mouse-ear cress) protein is RING-H2 finger protein ATL22 (ATL22).